A 616-amino-acid chain; its full sequence is Chaperone protein DnaK (616 aa).

T175 carries the phosphothreonine; by autocatalysis modification. The disordered stretch occupies residues 579–605; the sequence is GGDPSQAGGFDPNAAGGAQQAPHDDNV.

This sequence belongs to the heat shock protein 70 family.

Its function is as follows. Acts as a chaperone. The protein is Chaperone protein DnaK of Clostridium botulinum (strain Alaska E43 / Type E3).